The following is a 198-amino-acid chain: Na(+)-translocating NADH-quinone reductase subunit E (198 aa).

6 consecutive transmembrane segments (helical) span residues 11–31 (AVFV…FLAV), 35–55 (VSTA…AVPI), 77–97 (FLNF…LEMI), 110–130 (GIFL…SFMV), 140–160 (IVYG…MAGI), and 176–196 (LGIT…FSGV).

Belongs to the NqrDE/RnfAE family. Composed of six subunits; NqrA, NqrB, NqrC, NqrD, NqrE and NqrF.

It is found in the cell inner membrane. It carries out the reaction a ubiquinone + n Na(+)(in) + NADH + H(+) = a ubiquinol + n Na(+)(out) + NAD(+). Its function is as follows. NQR complex catalyzes the reduction of ubiquinone-1 to ubiquinol by two successive reactions, coupled with the transport of Na(+) ions from the cytoplasm to the periplasm. NqrA to NqrE are probably involved in the second step, the conversion of ubisemiquinone to ubiquinol. The sequence is that of Na(+)-translocating NADH-quinone reductase subunit E from Klebsiella pneumoniae subsp. pneumoniae (strain ATCC 700721 / MGH 78578).